The following is a 451-amino-acid chain: Probable glycine dehydrogenase (decarboxylating) subunit 1 (451 aa).

Belongs to the GcvP family. N-terminal subunit subfamily. The glycine cleavage system is composed of four proteins: P, T, L and H. In this organism, the P 'protein' is a heterodimer of two subunits.

It carries out the reaction N(6)-[(R)-lipoyl]-L-lysyl-[glycine-cleavage complex H protein] + glycine + H(+) = N(6)-[(R)-S(8)-aminomethyldihydrolipoyl]-L-lysyl-[glycine-cleavage complex H protein] + CO2. In terms of biological role, the glycine cleavage system catalyzes the degradation of glycine. The P protein binds the alpha-amino group of glycine through its pyridoxal phosphate cofactor; CO(2) is released and the remaining methylamine moiety is then transferred to the lipoamide cofactor of the H protein. The polypeptide is Probable glycine dehydrogenase (decarboxylating) subunit 1 (Thioalkalivibrio sulfidiphilus (strain HL-EbGR7)).